We begin with the raw amino-acid sequence, 518 residues long: Cytochrome P450 3A27 (518 aa).

Cys447 lines the heme pocket.

Belongs to the cytochrome P450 family. Requires heme as cofactor.

Its subcellular location is the endoplasmic reticulum membrane. The protein localises to the microsome membrane. It catalyses the reaction an organic molecule + reduced [NADPH--hemoprotein reductase] + O2 = an alcohol + oxidized [NADPH--hemoprotein reductase] + H2O + H(+). Cytochromes P450 are a group of heme-thiolate monooxygenases. In liver microsomes, this enzyme is involved in an NADPH-dependent electron transport pathway. It oxidizes a variety of structurally unrelated compounds, including steroids, fatty acids, and xenobiotics. The sequence is that of Cytochrome P450 3A27 (cyp3a27) from Oncorhynchus mykiss (Rainbow trout).